A 52-amino-acid polypeptide reads, in one-letter code: Large ribosomal subunit protein bL33 (52 aa).

It belongs to the bacterial ribosomal protein bL33 family.

This is Large ribosomal subunit protein bL33 (rpmG) from Chlamydia pneumoniae (Chlamydophila pneumoniae).